We begin with the raw amino-acid sequence, 102 residues long: MAKQKIRIRLKAYEHRILDQSADKIVETAKRTGATISGPIPLPTERTIYTVLRSPHKFKDSREQFEMRTHKRLIDIVNPTPKTVDSLMKLDLPSGVDIEIKL.

The protein belongs to the universal ribosomal protein uS10 family. As to quaternary structure, part of the 30S ribosomal subunit.

Involved in the binding of tRNA to the ribosomes. This is Small ribosomal subunit protein uS10 from Lactiplantibacillus plantarum (strain ATCC BAA-793 / NCIMB 8826 / WCFS1) (Lactobacillus plantarum).